Here is a 502-residue protein sequence, read N- to C-terminus: Cysteine--tRNA ligase (502 aa).

Cys30 lines the Zn(2+) pocket. Residues 32–42 (PTIYDYAHIGN) carry the 'HIGH' region motif. Positions 224, 263, and 267 each coordinate Zn(2+). Positions 296–300 (KMSKS) match the 'KMSKS' region motif. Lys299 is a binding site for ATP.

Belongs to the class-I aminoacyl-tRNA synthetase family. In terms of assembly, monomer. It depends on Zn(2+) as a cofactor.

Its subcellular location is the cytoplasm. It catalyses the reaction tRNA(Cys) + L-cysteine + ATP = L-cysteinyl-tRNA(Cys) + AMP + diphosphate. The protein is Cysteine--tRNA ligase of Bartonella quintana (strain Toulouse) (Rochalimaea quintana).